The following is a 41-amino-acid chain: U15-myrmicitoxin-Tb1b (41 aa).

The N-terminal stretch at 1–25 (MKIVKLITIFAMIATLMVTVTNGEA) is a signal peptide. Histidine amide is present on His-40.

In terms of tissue distribution, expressed by the venom gland.

It localises to the secreted. Its function is as follows. Venom protein with unknown function. Does not induce paralysis when a high dose is administered by intrathoracic injection into the blowfly Lucilia caesar. The sequence is that of U15-myrmicitoxin-Tb1b from Tetramorium bicarinatum (Tramp ant).